Consider the following 133-residue polypeptide: Transcription antitermination protein NusB (133 aa).

The protein belongs to the NusB family.

In terms of biological role, involved in transcription antitermination. Required for transcription of ribosomal RNA (rRNA) genes. Binds specifically to the boxA antiterminator sequence of the ribosomal RNA (rrn) operons. In Shewanella denitrificans (strain OS217 / ATCC BAA-1090 / DSM 15013), this protein is Transcription antitermination protein NusB.